The following is a 292-amino-acid chain: ATP synthase gamma chain (292 aa).

This sequence belongs to the ATPase gamma chain family. F-type ATPases have 2 components, CF(1) - the catalytic core - and CF(0) - the membrane proton channel. CF(1) has five subunits: alpha(3), beta(3), gamma(1), delta(1), epsilon(1). CF(0) has three main subunits: a, b and c.

Its subcellular location is the cell inner membrane. In terms of biological role, produces ATP from ADP in the presence of a proton gradient across the membrane. The gamma chain is believed to be important in regulating ATPase activity and the flow of protons through the CF(0) complex. This chain is ATP synthase gamma chain, found in Maridesulfovibrio salexigens (strain ATCC 14822 / DSM 2638 / NCIMB 8403 / VKM B-1763) (Desulfovibrio salexigens).